The sequence spans 369 residues: Protein DUF642 L-GALACTONO-1,4-LACTONE-RESPONSIVE GENE 2 (369 aa).

Positions 1 to 19 are cleaved as a signal peptide; it reads MEGVTVVSFFLLFIATAMA. An N-linked (GlcNAc...) asparagine glycan is attached at asparagine 125.

Expressed in roots, seedlings and leaves.

It is found in the secreted. Its subcellular location is the cell wall. Functionally, involved in the regulation of testa rupture during seed germination. Required during roots and rosettes development. This is Protein DUF642 L-GALACTONO-1,4-LACTONE-RESPONSIVE GENE 2 from Arabidopsis thaliana (Mouse-ear cress).